The chain runs to 1435 residues: DNA polymerase III PolC-type (1435 aa).

The region spanning 420-576 (YVVFDVETTG…YDTEATGYLL (157 aa)) is the Exonuclease domain.

The protein belongs to the DNA polymerase type-C family. PolC subfamily.

It localises to the cytoplasm. It catalyses the reaction DNA(n) + a 2'-deoxyribonucleoside 5'-triphosphate = DNA(n+1) + diphosphate. In terms of biological role, required for replicative DNA synthesis. This DNA polymerase also exhibits 3' to 5' exonuclease activity. The sequence is that of DNA polymerase III PolC-type from Bacillus cereus (strain ATCC 14579 / DSM 31 / CCUG 7414 / JCM 2152 / NBRC 15305 / NCIMB 9373 / NCTC 2599 / NRRL B-3711).